The primary structure comprises 146 residues: Envelope protein OPG155 (146 aa).

A helical; Signal-anchor for type III membrane protein membrane pass occupies residues 1 to 21; it reads MNSLSIFFIVVATAAVCLLFI. Residues 22–146 are Intravirion-facing; the sequence is QGYSIYENYG…AECQFLKSVL (125 aa).

The protein belongs to the orthopoxvirus OPG155 protein family. Part of a stable entry-fusion complex (EFC) which is at least composed of proteins OPG143, OPG147, OPG155, OPG086, OPG094, OPG107, OPG104, and OPG099. Formation of the viral membrane is necessary for the assembly of the complex. Interacts directly with protein OPG107. In terms of processing, contains two intramolecular disulfide bonds. They are created by the viral disulfide bond formation pathway, a poxvirus-specific pathway that operates on the cytoplasmic side of the MV membranes.

Its subcellular location is the virion membrane. Envelope protein required for virus entry into host cell and for cell-cell fusion (syncytium formation). This is Envelope protein OPG155 (OPG155) from Vaccinia virus (strain Ankara) (VACV).